We begin with the raw amino-acid sequence, 78 residues long: Antitoxin VapB2 (78 aa).

The SpoVT-AbrB domain maps to 4-44; it reads AKIFMNGQSQAVRLPKEFRFSVKEVSVIPLGKGIVLQPLPN.

Belongs to the VapB family. In terms of assembly, forms complexes with VapC2; probably VapC2(4):VapB2(2) in the absence of DNA, and VapC2(4):VapB2(4) in the presence of DNA. Crystallizes as heterodimers with stoichiometry VapC2(4):VapB2(4) in the presence of its probable promoter DNA. The heterodimers are in contact via alternative VapC-VapC and VapB-VapB interactions. This subunit contacts DNA.

Its function is as follows. Antitoxin component of a type II toxin-antitoxin (TA) system. Upon expression in E.coli or S.cerevisiae neutralizes the effect of cognate toxin VapC2, partially inhibits the RNase activity of VapC2. This is Antitoxin VapB2 (vapB2) from Rickettsia felis (strain ATCC VR-1525 / URRWXCal2) (Rickettsia azadi).